We begin with the raw amino-acid sequence, 101 residues long: Vacuolar ATPase assembly integral membrane protein VMA21 (101 aa).

At 1–25 the chain is on the cytoplasmic side; sequence MERLDKAALNALQPSDFRNESSLAS. The chain crosses the membrane as a helical span at residues 26-46; it reads TLKTLLFFTALMITVPIGLYF. Residues 47–65 are Lumenal-facing; sequence TTKSYVFEGAFGMSNRDSY. The helical transmembrane segment at 66–86 threads the bilayer; it reads FYAAIVAVVAVHVVLALFVYV. Topologically, residues 87–101 are cytoplasmic; the sequence is AWNEGSRQWREGKQD.

It belongs to the VMA21 family. As to quaternary structure, associates with the V0 complex of the vacuolar ATPase (V-ATPase). Interacts with ATP6AP2.

The protein resides in the endoplasmic reticulum membrane. The protein localises to the endoplasmic reticulum-Golgi intermediate compartment membrane. It localises to the cytoplasmic vesicle. Its subcellular location is the COPII-coated vesicle membrane. Required for the assembly of the V0 complex of the vacuolar ATPase (V-ATPase) in the endoplasmic reticulum. This chain is Vacuolar ATPase assembly integral membrane protein VMA21, found in Bos taurus (Bovine).